The following is a 96-amino-acid chain: Large ribosomal subunit protein bL28 (96 aa).

A disordered region spans residues 1 to 23 (MSRVCELSGKAPMTGNTVSHANN).

It belongs to the bacterial ribosomal protein bL28 family.

The polypeptide is Large ribosomal subunit protein bL28 (Cereibacter sphaeroides (strain ATCC 17025 / ATH 2.4.3) (Rhodobacter sphaeroides)).